The chain runs to 517 residues: Intermediate filament family orphan 2 (517 aa).

Positions 53 to 484 (NIHLLKGLNV…RLIKGSADRN (432 aa)) constitute an IF rod domain. Disordered stretches follow at residues 104-129 (EQAV…SSGA), 330-349 (KVAS…RFSD), and 478-517 (KGSA…PMVS). Residues 485–497 (SPSPSSVASSDSG) show a composition bias toward low complexity. The segment covering 501-517 (EIQDEFEREADVEPMVS) has biased composition (acidic residues).

This sequence belongs to the intermediate filament family.

The chain is Intermediate filament family orphan 2 (IFFO2) from Homo sapiens (Human).